Consider the following 245-residue polypeptide: Tryptophan synthase alpha chain (245 aa).

Active-site proton acceptor residues include E37 and D48.

It belongs to the TrpA family. Tetramer of two alpha and two beta chains.

The enzyme catalyses (1S,2R)-1-C-(indol-3-yl)glycerol 3-phosphate + L-serine = D-glyceraldehyde 3-phosphate + L-tryptophan + H2O. It functions in the pathway amino-acid biosynthesis; L-tryptophan biosynthesis; L-tryptophan from chorismate: step 5/5. In terms of biological role, the alpha subunit is responsible for the aldol cleavage of indoleglycerol phosphate to indole and glyceraldehyde 3-phosphate. The protein is Tryptophan synthase alpha chain of Saccharolobus solfataricus (strain ATCC 35092 / DSM 1617 / JCM 11322 / P2) (Sulfolobus solfataricus).